A 313-amino-acid polypeptide reads, in one-letter code: Probable cell division protein WhiA (313 aa).

The segment at residues 274–308 (SLKELGELVPGGPISKSGVNHRLRKLNAYADELRA) is a DNA-binding region (H-T-H motif).

The protein belongs to the WhiA family.

Its function is as follows. Involved in cell division and chromosome segregation. This chain is Probable cell division protein WhiA, found in Limosilactobacillus reuteri subsp. reuteri (strain JCM 1112) (Lactobacillus reuteri).